We begin with the raw amino-acid sequence, 544 residues long: CTP synthase (544 aa).

The tract at residues 1–265 (MTQYIFITGG…DDLVVKHFGL (265 aa)) is amidoligase domain. Residue Ser13 coordinates CTP. A UTP-binding site is contributed by Ser13. Residues 14–19 (SLGKGI) and Asp71 contribute to the ATP site. Mg(2+)-binding residues include Asp71 and Glu139. CTP-binding positions include 146-148 (DIE), 186-191 (KTKPTQ), and Lys222. Residues 186–191 (KTKPTQ) and Lys222 each bind UTP. In terms of domain architecture, Glutamine amidotransferase type-1 spans 290–541 (TVAMVGKYVN…IAAALDYQTE (252 aa)). Gly351 contacts L-glutamine. Residue Cys378 is the Nucleophile; for glutamine hydrolysis of the active site. L-glutamine contacts are provided by residues 379–382 (LGLQ), Glu402, and Arg469. Catalysis depends on residues His514 and Glu516.

It belongs to the CTP synthase family. As to quaternary structure, homotetramer.

It carries out the reaction UTP + L-glutamine + ATP + H2O = CTP + L-glutamate + ADP + phosphate + 2 H(+). The catalysed reaction is L-glutamine + H2O = L-glutamate + NH4(+). It catalyses the reaction UTP + NH4(+) + ATP = CTP + ADP + phosphate + 2 H(+). It functions in the pathway pyrimidine metabolism; CTP biosynthesis via de novo pathway; CTP from UDP: step 2/2. Allosterically activated by GTP, when glutamine is the substrate; GTP has no effect on the reaction when ammonia is the substrate. The allosteric effector GTP functions by stabilizing the protein conformation that binds the tetrahedral intermediate(s) formed during glutamine hydrolysis. Inhibited by the product CTP, via allosteric rather than competitive inhibition. Its function is as follows. Catalyzes the ATP-dependent amination of UTP to CTP with either L-glutamine or ammonia as the source of nitrogen. Regulates intracellular CTP levels through interactions with the four ribonucleotide triphosphates. This chain is CTP synthase, found in Dichelobacter nodosus (strain VCS1703A).